The sequence spans 456 residues: Putative alanyl-tRNA editing protein alaX (456 aa).

Residues histidine 125, histidine 129, cysteine 240, and histidine 244 each contribute to the Zn(2+) site.

It belongs to the class-II aminoacyl-tRNA synthetase family. Alax-L subfamily. It depends on Zn(2+) as a cofactor.

Its function is as follows. May function in trans to edit the amino acid moiety from incorrectly charged tRNA(Ala). The protein is Putative alanyl-tRNA editing protein alaX of Saccharomyces cerevisiae (strain ATCC 204508 / S288c) (Baker's yeast).